Reading from the N-terminus, the 101-residue chain is NAD(P)H-quinone oxidoreductase subunit 4L, chloroplastic (101 aa).

Helical transmembrane passes span 2–22 (MFELVLFLSVYLFSIGIYGLI), 32–52 (ICLELILNSINLNLVTFSDLF), and 61–81 (IFAIFVIALAAAEAAIGLSIL).

This sequence belongs to the complex I subunit 4L family. NDH is composed of at least 16 different subunits, 5 of which are encoded in the nucleus.

It localises to the plastid. The protein resides in the chloroplast thylakoid membrane. It catalyses the reaction a plastoquinone + NADH + (n+1) H(+)(in) = a plastoquinol + NAD(+) + n H(+)(out). The catalysed reaction is a plastoquinone + NADPH + (n+1) H(+)(in) = a plastoquinol + NADP(+) + n H(+)(out). In terms of biological role, NDH shuttles electrons from NAD(P)H:plastoquinone, via FMN and iron-sulfur (Fe-S) centers, to quinones in the photosynthetic chain and possibly in a chloroplast respiratory chain. The immediate electron acceptor for the enzyme in this species is believed to be plastoquinone. Couples the redox reaction to proton translocation, and thus conserves the redox energy in a proton gradient. The polypeptide is NAD(P)H-quinone oxidoreductase subunit 4L, chloroplastic (Lolium perenne (Perennial ryegrass)).